A 730-amino-acid chain; its full sequence is Synaptotagmin-like protein 5 (730 aa).

Positions 7 to 123 constitute a RabBD domain; sequence FINLSFLLDH…IITGEWFFEE (117 aa). Residues 64–106 form an FYVE-type zinc finger; the sequence is CVHCHRNLGLIFDRGDPCQACSLRVCRECRVAGPNGSWKCTVC. The residue at position 147 (Ser-147) is a Phosphoserine. Disordered stretches follow at residues 147–188, 217–271, and 294–355; these read SPGA…GFLL, QHFR…TRTV, and SQEL…LDKD. Polar residues-rich tracts occupy residues 248–271 and 305–322; these read PKSS…TRTV and TSGT…SSDQ. C2 domains lie at 406-527 and 563-694; these read VSGE…DEWF and PPEQ…VDWM.

In terms of assembly, binds RAB27A that has been activated by GTP-binding, and possibly also RAB3A and RAB6A. As to expression, highly expressed in placenta and liver.

It localises to the membrane. Its function is as follows. May act as Rab effector protein and play a role in vesicle trafficking. Binds phospholipids. This is Synaptotagmin-like protein 5 (SYTL5) from Homo sapiens (Human).